The sequence spans 458 residues: MSSGKIVQVIGAVVDVEFPQDQVPKIYDALIVDERGLTLEVQQQLGDGVVRTIAMGSSDGLKRSEKVSATGKPISVPVGKGTLGRIMDVLGEPVDEKGAVETEERWGIHRSAPSFAEQAGGAELLETGIKVIDLLCPFAKGGKVGLFGGAGVGKTVNMMELIRNIATEHAGYSVFAGVGERTREGNDFYHEMKDSNVLDKVALVYGQMNEPPGNRLRVALTGLTMAEYFRDEGRDILMFIDNIYRYTLAGTEVSALLGRMPSAVGYQPTLAEEMGKLQERITSTKTGSITSVQAVYVPADDLTDPSPATTFAHLDATVVLARGIAELGIYPAVDPLDSTSRQLDPLVVGEEHYNVARGVQGVLQRYKELRDIIAILGMDELSEDDKLTVARARKIQRFLSQPFFVAEVFTGAPGKYVPLKDTIASFKAILDGEYDHLPEQAFYMVGTVDEAAEKAKNL.

148–155 (GGAGVGKT) serves as a coordination point for ATP.

Belongs to the ATPase alpha/beta chains family. In terms of assembly, F-type ATPases have 2 components, CF(1) - the catalytic core - and CF(0) - the membrane proton channel. CF(1) has five subunits: alpha(3), beta(3), gamma(1), delta(1), epsilon(1). CF(0) has three main subunits: a(1), b(2) and c(9-12). The alpha and beta chains form an alternating ring which encloses part of the gamma chain. CF(1) is attached to CF(0) by a central stalk formed by the gamma and epsilon chains, while a peripheral stalk is formed by the delta and b chains.

It is found in the cell inner membrane. It carries out the reaction ATP + H2O + 4 H(+)(in) = ADP + phosphate + 5 H(+)(out). Produces ATP from ADP in the presence of a proton gradient across the membrane. The catalytic sites are hosted primarily by the beta subunits. This Alkalilimnicola ehrlichii (strain ATCC BAA-1101 / DSM 17681 / MLHE-1) protein is ATP synthase subunit beta.